A 360-amino-acid chain; its full sequence is tRNA N6-adenosine threonylcarbamoyltransferase (360 aa).

2 residues coordinate Fe cation: His115 and His119. Residues 137–141 (LVSGG), Asp170, Gly183, and Asn283 each bind substrate. Asp311 lines the Fe cation pocket.

The protein belongs to the KAE1 / TsaD family. Fe(2+) serves as cofactor.

The protein resides in the cytoplasm. It carries out the reaction L-threonylcarbamoyladenylate + adenosine(37) in tRNA = N(6)-L-threonylcarbamoyladenosine(37) in tRNA + AMP + H(+). Functionally, required for the formation of a threonylcarbamoyl group on adenosine at position 37 (t(6)A37) in tRNAs that read codons beginning with adenine. Is involved in the transfer of the threonylcarbamoyl moiety of threonylcarbamoyl-AMP (TC-AMP) to the N6 group of A37, together with TsaE and TsaB. TsaD likely plays a direct catalytic role in this reaction. This chain is tRNA N6-adenosine threonylcarbamoyltransferase, found in Sinorhizobium medicae (strain WSM419) (Ensifer medicae).